The chain runs to 67 residues: Large ribosomal subunit protein uL29 (67 aa).

The protein belongs to the universal ribosomal protein uL29 family.

The sequence is that of Large ribosomal subunit protein uL29 (rpmC) from Halalkalibacterium halodurans (strain ATCC BAA-125 / DSM 18197 / FERM 7344 / JCM 9153 / C-125) (Bacillus halodurans).